Reading from the N-terminus, the 704-residue chain is G-protein coupled receptor-associated protein LMBRD2B (704 aa).

At 1–3 (MSG) the chain is on the extracellular side. Residues 4-21 (AALGIEIVVVFFLALFLL) traverse the membrane as a helical segment. Topologically, residues 22–33 (HRYGDFKKQQRM) are cytoplasmic. A helical transmembrane segment spans residues 34-54 (VLFGTLLAWYLCFLIVFILPL). Topologically, residues 55–111 (DVSTTIYNQCLIDQEAQTQTPSVSPVLSEQTTANASISPAKSTQRVCYKPWSYIPDG) are extracellular. Asparagine 88 carries N-linked (GlcNAc...) asparagine glycosylation. A helical membrane pass occupies residues 112–132 (IMPVFWRVVYWTSQCLTWLLL). Residues 133–157 (PFMQSYARSGGFTITGKIKTALIEN) are Cytoplasmic-facing. Residues 158 to 178 (AIYYGTYLFIFGSLLIYVAVH) traverse the membrane as a helical segment. Residues 179–192 (PQWHLSWYELQTIG) lie on the Extracellular side of the membrane. The helical transmembrane segment at 193–213 (ITAANTWGLFLLVLLLGYGLV) threads the bilayer. Residues 214–393 (DIPRSYWEAS…ECLLKQWFYR (180 aa)) are Cytoplasmic-facing. Positions 235–266 (KAAKLMTEKADSEENLEDVMEEVRKINESIKY) form a coiled coil. A helical membrane pass occupies residues 394–414 (VLAVVLALFSVAVVWSECTFF). Over 415–438 (STHPVLSLFAVFIQLAERDYNYLY) the chain is Extracellular. A helical membrane pass occupies residues 439–459 (IEMACFITIFFLCTCVYSTVF). At 460 to 481 (RIRVFNYYYLASHHQTDAYSLQ) the chain is on the cytoplasmic side. A helical transmembrane segment spans residues 482-502 (FSGMLFCRLTPPLCLNFLGLI). Topologically, residues 503-527 (HMDSAISHQAKKQTAYTSIMGSMRV) are extracellular. A helical membrane pass occupies residues 528-548 (LSFIANGFYIYYPMLIVVLCI). The Cytoplasmic segment spans residues 549–704 (ATYFSLGTRC…SSRNRIFDDV (156 aa)). Residues 576–612 (DLIDEGRELLRRERRKRQRIEDGENRRREWRERYAQR) are a coiled coil. Disordered regions lie at residues 613-654 (DENA…QSGR) and 672-704 (TLTDDPLQSDTGRHAGGRYLSMSSSRNRIFDDV). The segment covering 631 to 654 (YGETLNANTNRQAKYTRSGSQSGR) has biased composition (polar residues).

It belongs to the LIMR family.

Its subcellular location is the cell membrane. In terms of biological role, may associate with G-protein coupled receptors and regulate downstream signaling pathways. The chain is G-protein coupled receptor-associated protein LMBRD2B (lmbrd2b) from Danio rerio (Zebrafish).